A 1872-amino-acid chain; its full sequence is Ral GTPase-activating protein subunit alpha-2 (1872 aa).

Positions 350–370 are disordered; it reads DGAGSTEQDKSHSNSSTLSDR. 3 positions are modified to phosphoserine: Ser373, Ser376, and Ser379. Positions 445–469 are enriched in basic and acidic residues; sequence PDKKDVAQEDADKLGLSETDSKEAS. Residues 445 to 481 are disordered; the sequence is PDKKDVAQEDADKLGLSETDSKEASSESSGHKRSSSW. At Ser486 the chain carries Phosphoserine. Ser696 bears the Phosphoserine; by PKB mark. Disordered stretches follow at residues 711-730 and 758-813; these read FRSA…NTVR and QQVP…GITM. Thr715 is subject to Phosphothreonine; by PKB. Polar residues-rich tracts occupy residues 758–768 and 775–795; these read QQVPRSSSTSD and SDSS…SEPK. The span at 796–810 shows a compositional bias: basic and acidic residues; the sequence is SVQESKGHVTHEHEG. Residues Ser819 and Ser820 each carry the phosphoserine modification. The interval 831 to 851 is disordered; the sequence is QQAHGRCRQRQTSESTGSDTV. The segment covering 840–849 has biased composition (polar residues); that stretch reads RQTSESTGSD. Ser1592 is subject to Phosphoserine. In terms of domain architecture, Rap-GAP spans 1634–1842; sequence LKNLDSRQCR…EERALYLEAI (209 aa).

Component of the heterodimeric RalGAP2 complex with RALGAPB. Heterodimerization is required for activity. In terms of tissue distribution, abundantly expressed in testis, pancreas, lung, thymus, brown fat, and white fat.

It localises to the cytoplasm. In terms of biological role, catalytic subunit of the heterodimeric RalGAP2 complex which acts as a GTPase activator for the Ras-like small GTPases RALA and RALB. This Mus musculus (Mouse) protein is Ral GTPase-activating protein subunit alpha-2 (Ralgapa2).